Reading from the N-terminus, the 86-residue chain is Conotoxin Ec15a (86 aa).

The signal sequence occupies residues 1–23 (MEKLTILILVATVLLAIQVLGQG). The propeptide occupies 24 to 49 (EGEKPPKEWVQQYAAKRLWALMKGPR). Q50 is subject to Pyrrolidone carboxylic acid.

The protein belongs to the conotoxin O2 superfamily. In terms of processing, contains 4 disulfide bonds. In terms of tissue distribution, expressed by the venom duct.

Its subcellular location is the secreted. This chain is Conotoxin Ec15a, found in Conus emaciatus (False virgin cone).